The chain runs to 229 residues: Protein GrpE (229 aa).

Positions 1 to 89 (MSDFNKDDYL…AEGSSLTPLG (89 aa)) are disordered. The segment covering 24–36 (ASPDADGADAPSD) has biased composition (low complexity). The segment covering 39-50 (EQLKDDMLKDAA) has biased composition (basic and acidic residues). Positions 65–84 (KAAAEATADAASDGDAEGSS) are enriched in low complexity.

The protein belongs to the GrpE family. In terms of assembly, homodimer.

Its subcellular location is the cytoplasm. Its function is as follows. Participates actively in the response to hyperosmotic and heat shock by preventing the aggregation of stress-denatured proteins, in association with DnaK and GrpE. It is the nucleotide exchange factor for DnaK and may function as a thermosensor. Unfolded proteins bind initially to DnaJ; upon interaction with the DnaJ-bound protein, DnaK hydrolyzes its bound ATP, resulting in the formation of a stable complex. GrpE releases ADP from DnaK; ATP binding to DnaK triggers the release of the substrate protein, thus completing the reaction cycle. Several rounds of ATP-dependent interactions between DnaJ, DnaK and GrpE are required for fully efficient folding. The sequence is that of Protein GrpE from Bifidobacterium animalis subsp. lactis (strain AD011).